We begin with the raw amino-acid sequence, 82 residues long: MQKQSNINSVELSRKSEELIKASSNRYRAVVQVANRAKRRRYEDFDNFDEQAVKPVIRAVLEMSDELMQPEIISEVGNNIDR.

It belongs to the RNA polymerase subunit omega family. In terms of assembly, in cyanobacteria the RNAP catalytic core is composed of 2 alpha, 1 beta, 1 beta', 1 gamma and 1 omega subunit. When a sigma factor is associated with the core the holoenzyme is formed, which can initiate transcription.

It catalyses the reaction RNA(n) + a ribonucleoside 5'-triphosphate = RNA(n+1) + diphosphate. Promotes RNA polymerase assembly. Latches the N- and C-terminal regions of the beta' subunit thereby facilitating its interaction with the beta and alpha subunits. The chain is DNA-directed RNA polymerase subunit omega from Trichodesmium erythraeum (strain IMS101).